Here is a 260-residue protein sequence, read N- to C-terminus: Pyridoxine 5'-phosphate synthase (260 aa).

N15 lines the 3-amino-2-oxopropyl phosphate pocket. Residue 17-18 (DH) participates in 1-deoxy-D-xylulose 5-phosphate binding. R26 contributes to the 3-amino-2-oxopropyl phosphate binding site. Residue H51 is the Proton acceptor of the active site. R53 and H58 together coordinate 1-deoxy-D-xylulose 5-phosphate. The Proton acceptor role is filled by E78. T108 contributes to the 1-deoxy-D-xylulose 5-phosphate binding site. H199 functions as the Proton donor in the catalytic mechanism. 3-amino-2-oxopropyl phosphate is bound by residues G200 and 221–222 (GH).

It belongs to the PNP synthase family. As to quaternary structure, homooctamer; tetramer of dimers.

The protein resides in the cytoplasm. It carries out the reaction 3-amino-2-oxopropyl phosphate + 1-deoxy-D-xylulose 5-phosphate = pyridoxine 5'-phosphate + phosphate + 2 H2O + H(+). It participates in cofactor biosynthesis; pyridoxine 5'-phosphate biosynthesis; pyridoxine 5'-phosphate from D-erythrose 4-phosphate: step 5/5. Catalyzes the complicated ring closure reaction between the two acyclic compounds 1-deoxy-D-xylulose-5-phosphate (DXP) and 3-amino-2-oxopropyl phosphate (1-amino-acetone-3-phosphate or AAP) to form pyridoxine 5'-phosphate (PNP) and inorganic phosphate. This is Pyridoxine 5'-phosphate synthase from Cupriavidus metallidurans (strain ATCC 43123 / DSM 2839 / NBRC 102507 / CH34) (Ralstonia metallidurans).